Reading from the N-terminus, the 286-residue chain is ATP synthase gamma chain (286 aa).

The protein belongs to the ATPase gamma chain family. F-type ATPases have 2 components, CF(1) - the catalytic core - and CF(0) - the membrane proton channel. CF(1) has five subunits: alpha(3), beta(3), gamma(1), delta(1), epsilon(1). CF(0) has three main subunits: a, b and c.

The protein resides in the cell inner membrane. Functionally, produces ATP from ADP in the presence of a proton gradient across the membrane. The gamma chain is believed to be important in regulating ATPase activity and the flow of protons through the CF(0) complex. This Dechloromonas aromatica (strain RCB) protein is ATP synthase gamma chain.